The following is a 472-amino-acid chain: Adenosylhomocysteinase (472 aa).

Positions 63, 138, and 198 each coordinate substrate. 199–201 serves as a coordination point for NAD(+); it reads TTT. Substrate contacts are provided by lysine 228 and aspartate 232. NAD(+) is bound by residues asparagine 233, 262–267, glutamate 285, asparagine 320, 341–343, and asparagine 386; these read GYGDVG and IGH.

The protein belongs to the adenosylhomocysteinase family. Requires NAD(+) as cofactor.

The protein resides in the cytoplasm. The enzyme catalyses S-adenosyl-L-homocysteine + H2O = L-homocysteine + adenosine. Its pathway is amino-acid biosynthesis; L-homocysteine biosynthesis; L-homocysteine from S-adenosyl-L-homocysteine: step 1/1. Its function is as follows. May play a key role in the regulation of the intracellular concentration of adenosylhomocysteine. In Methylococcus capsulatus (strain ATCC 33009 / NCIMB 11132 / Bath), this protein is Adenosylhomocysteinase.